Consider the following 589-residue polypeptide: Protein PAF1 homolog (589 aa).

The span at 1–54 (MASYRPPYPPLPQPPSQNSLAPPPPPPSLPPPVPPPPPSHQPYSYPPPPPPPPH) shows a compositional bias: pro residues. 2 disordered regions span residues 1–180 (MASY…PLLT) and 542–589 (GVYS…DYSE). Low complexity predominate over residues 55–65 (AYYQQGPHYPQ). The segment covering 71–87 (APPPPPPPSAPPPLVPD) has biased composition (pro residues). A compositionally biased stretch (basic and acidic residues) spans 88-116 (PPRHQGPNDHEKGASKQVGRRERAKPDPS). A compositionally biased stretch (basic residues) spans 117-127 (KHHHRSHLPHS). Residues 126-159 (HSKKIETEEERRLRKKRELEKQRQDEKHRQQMKN) are a coiled coil. Residues 128-154 (KKIETEEERRLRKKRELEKQRQDEKHR) are compositionally biased toward basic and acidic residues.

Belongs to the PAF1 family. As to quaternary structure, component of the nuclear PAF1 complex (PAF1C), which consists of VIP2/ELF7/PAF1, VIP3/SKI8/WDR61, VIP4/LEO1, VIP5/RTF1, VIP6/ELF8/CTR9 and CDC73. Expressed in roots, leaves and shoot apex.

Its subcellular location is the nucleus. In terms of biological role, component of the PAF1 complex (PAF1C) which is involved in histone modifications such as methylation on histone H3 'Lys-4' (H3K4me3). Involved in regulation of flowering time. Required for the expression of the flowering repressors and MAD-box genes FLC, AGL27/FLM and AGL31/MAF2. Required for histone H3 trimethylation on 'Lys-4' H3K4me3 at the FLC and AGL27/FLM loci. Involved in the control of seed dormancy and germination. This chain is Protein PAF1 homolog, found in Arabidopsis thaliana (Mouse-ear cress).